A 428-amino-acid chain; its full sequence is CinA-like protein (428 aa).

Belongs to the CinA family.

This Chlorobium phaeovibrioides (strain DSM 265 / 1930) (Prosthecochloris vibrioformis (strain DSM 265)) protein is CinA-like protein.